The sequence spans 116 residues: Large ribosomal subunit protein uL18 (116 aa).

Belongs to the universal ribosomal protein uL18 family. In terms of assembly, part of the 50S ribosomal subunit; part of the 5S rRNA/L5/L18/L25 subcomplex. Contacts the 5S and 23S rRNAs.

Its function is as follows. This is one of the proteins that bind and probably mediate the attachment of the 5S RNA into the large ribosomal subunit, where it forms part of the central protuberance. The protein is Large ribosomal subunit protein uL18 of Shewanella halifaxensis (strain HAW-EB4).